A 240-amino-acid chain; its full sequence is Ubiquitin domain-containing protein 2 (240 aa).

Residues 1–48 (MGGCVGSHHDSSGSLNENSDGTGVALGRNQPLKREKPKWKSDYPMTDG) form a disordered region. Over residues 12 to 21 (SGSLNENSDG) the composition is skewed to polar residues. Basic and acidic residues predominate over residues 32–41 (LKREKPKWKS). Positions 152-227 (CQLRLRLSTG…VQVIVSQPPT (76 aa)) constitute a Ubiquitin-like domain.

The protein resides in the cytoplasm. The polypeptide is Ubiquitin domain-containing protein 2 (ubtd2) (Danio rerio (Zebrafish)).